Reading from the N-terminus, the 180-residue chain is UPF0340 protein LL0489 (180 aa).

It belongs to the UPF0340 family.

This Lactococcus lactis subsp. lactis (strain IL1403) (Streptococcus lactis) protein is UPF0340 protein LL0489 (yeiF).